The following is a 417-amino-acid chain: UPF0754 membrane protein PCC8801_0398 (417 aa).

2 consecutive transmembrane segments (helical) span residues 11–31 (FSLL…GYFT) and 395–415 (IVNI…ILLI).

The protein belongs to the UPF0754 family.

The protein resides in the cell inner membrane. The protein is UPF0754 membrane protein PCC8801_0398 of Rippkaea orientalis (strain PCC 8801 / RF-1) (Cyanothece sp. (strain PCC 8801)).